Here is a 343-residue protein sequence, read N- to C-terminus: Protein pelota homolog (343 aa).

The protein belongs to the eukaryotic release factor 1 family. Pelota subfamily. As to quaternary structure, monomer. The cofactor is a divalent metal cation.

It is found in the cytoplasm. In terms of biological role, may function in recognizing stalled ribosomes, interact with stem-loop structures in stalled mRNA molecules, and effect endonucleolytic cleavage of the mRNA. May play a role in the release non-functional ribosomes and degradation of damaged mRNAs. Has endoribonuclease activity. This chain is Protein pelota homolog, found in Cenarchaeum symbiosum (strain A).